An 831-amino-acid chain; its full sequence is Intraflagellar transport protein 88 (831 aa).

TPR repeat units follow at residues 68–101, 120–153, 156–189, 248–281, 492–525, 526–559, 560–593, 595–627, 632–665, 666–699, and 700–733; these read IFKL…EQKV, TCIW…AEGA, AQIR…ASPS, FDPL…SILI, RGVH…DPYD, SFAH…NMES, VQAT…LPSY, DAIY…FSAV, PSIY…VPFS, LAVI…DTTT, and PKWS…FPTN. The interval 785 to 816 is disordered; the sequence is RRNSVAAVGPGSRAGQDRFEASNNRVSSNTGD. A compositionally biased stretch (polar residues) spans 805-815; sequence ASNNRVSSNTG.

The protein localises to the cell projection. It localises to the cilium. The protein resides in the flagellum. It is found in the cytoplasm. Its subcellular location is the cytoskeleton. The protein localises to the flagellum axoneme. It localises to the flagellum basal body. Component of the intraflagellar transport complex B (IFT-B) involved in flagellar assembly. The sequence is that of Intraflagellar transport protein 88 from Giardia intestinalis (strain ATCC 50803 / WB clone C6) (Giardia lamblia).